The sequence spans 318 residues: Porphobilinogen deaminase (318 aa).

Cys-241 is subject to S-(dipyrrolylmethanemethyl)cysteine.

This sequence belongs to the HMBS family. As to quaternary structure, monomer. It depends on dipyrromethane as a cofactor.

It carries out the reaction 4 porphobilinogen + H2O = hydroxymethylbilane + 4 NH4(+). The protein operates within porphyrin-containing compound metabolism; protoporphyrin-IX biosynthesis; coproporphyrinogen-III from 5-aminolevulinate: step 2/4. Tetrapolymerization of the monopyrrole PBG into the hydroxymethylbilane pre-uroporphyrinogen in several discrete steps. The polypeptide is Porphobilinogen deaminase (Geobacter metallireducens (strain ATCC 53774 / DSM 7210 / GS-15)).